The sequence spans 372 residues: Maltose/maltodextrin import ATP-binding protein MalK (372 aa).

An ABC transporter domain is found at 4–234 (VSLRNVGKSY…PANRFVAGFI (231 aa)). ATP is bound at residue 36-43 (GPSGCGKS).

Belongs to the ABC transporter superfamily. Maltooligosaccharide importer (TC 3.A.1.1.1) family. As to quaternary structure, the complex is composed of two ATP-binding proteins (MalK), two transmembrane proteins (MalG and MalK) and a solute-binding protein (MalE).

The protein resides in the cell inner membrane. The catalysed reaction is D-maltose(out) + ATP + H2O = D-maltose(in) + ADP + phosphate + H(+). Its function is as follows. Part of the ABC transporter complex MalEFGK involved in maltose/maltodextrin import. Responsible for energy coupling to the transport system. This Mannheimia succiniciproducens (strain KCTC 0769BP / MBEL55E) protein is Maltose/maltodextrin import ATP-binding protein MalK.